The sequence spans 519 residues: Putative glucosylceramidase 4 (519 aa).

The first 24 residues, 1-24 (MILNISVSLLIFLAFYGFSSDAKS), serve as a signal peptide directing secretion. E256 acts as the Proton donor in catalysis. E361 serves as the catalytic Nucleophile.

Belongs to the glycosyl hydrolase 30 family.

The catalysed reaction is a beta-D-glucosylceramide + H2O = an N-acyl-sphingoid base + D-glucose. It catalyses the reaction a beta-D-glucosyl-(1&lt;-&gt;1')-N-acylsphing-4-enine + H2O = an N-acylsphing-4-enine + D-glucose. It carries out the reaction an N-acyl-1-beta-D-glucosyl-15-methylhexadecasphing-4-enine + H2O = an N-acyl-15-methylhexadecasphing-4-enine + D-glucose. It participates in lipid metabolism; sphingolipid metabolism. Functionally, glucosylceramidase that catalyzes the hydrolysis of glucosylceramides into free ceramides and glucose. C.elegans contains specific sphingoid bases, which are unique or different in structure compared to the sphingoid bases found in other animals. Two examples of these distinctive compounds are: 15-methylhexadecasphinganine and 15-methylhexadecasphing-4-enine. In Caenorhabditis elegans, this protein is Putative glucosylceramidase 4 (gba-4).